The chain runs to 314 residues: MQIHLANPRGFCAGVDRAITIVERALEIFSPPIYVRHEVVHNKFVVDGLKERGAVFVDELVEVPDDSIVIFSAHGVSQAVRNEASSRGLKVFDATCPLVTKVHMEVMRASSKGTECVLIGHQGHPEVEGTMGQYDNQDGGIYLVESVDDVARLEVKNPSALYYCSQTTLSVDDTADVIDALRAKFPAIEGPRKDDICYATQNRQDSVRELSADCDILLVVGAQNSSNSNRLRELAEKIGAKAHLIADANCIQKEWLANAKHIGVTAGASAPEVLVQGVVDRLKEWGASSATERPGRLENIEFAVPKELRVKQVS.

Cys12 is a [4Fe-4S] cluster binding site. (2E)-4-hydroxy-3-methylbut-2-enyl diphosphate is bound by residues His41 and His74. His41 and His74 together coordinate dimethylallyl diphosphate. Residues His41 and His74 each coordinate isopentenyl diphosphate. Cys96 lines the [4Fe-4S] cluster pocket. His124 contributes to the (2E)-4-hydroxy-3-methylbut-2-enyl diphosphate binding site. Residue His124 coordinates dimethylallyl diphosphate. His124 contributes to the isopentenyl diphosphate binding site. Residue Glu126 is the Proton donor of the active site. Position 167 (Thr167) interacts with (2E)-4-hydroxy-3-methylbut-2-enyl diphosphate. Cys197 lines the [4Fe-4S] cluster pocket. Residues Ser225, Ser226, Asn227, and Ser269 each coordinate (2E)-4-hydroxy-3-methylbut-2-enyl diphosphate. Dimethylallyl diphosphate is bound by residues Ser225, Ser226, Asn227, and Ser269. Isopentenyl diphosphate contacts are provided by Ser225, Ser226, Asn227, and Ser269.

The protein belongs to the IspH family. [4Fe-4S] cluster is required as a cofactor.

The catalysed reaction is isopentenyl diphosphate + 2 oxidized [2Fe-2S]-[ferredoxin] + H2O = (2E)-4-hydroxy-3-methylbut-2-enyl diphosphate + 2 reduced [2Fe-2S]-[ferredoxin] + 2 H(+). The enzyme catalyses dimethylallyl diphosphate + 2 oxidized [2Fe-2S]-[ferredoxin] + H2O = (2E)-4-hydroxy-3-methylbut-2-enyl diphosphate + 2 reduced [2Fe-2S]-[ferredoxin] + 2 H(+). It participates in isoprenoid biosynthesis; dimethylallyl diphosphate biosynthesis; dimethylallyl diphosphate from (2E)-4-hydroxy-3-methylbutenyl diphosphate: step 1/1. Its pathway is isoprenoid biosynthesis; isopentenyl diphosphate biosynthesis via DXP pathway; isopentenyl diphosphate from 1-deoxy-D-xylulose 5-phosphate: step 6/6. Functionally, catalyzes the conversion of 1-hydroxy-2-methyl-2-(E)-butenyl 4-diphosphate (HMBPP) into a mixture of isopentenyl diphosphate (IPP) and dimethylallyl diphosphate (DMAPP). Acts in the terminal step of the DOXP/MEP pathway for isoprenoid precursor biosynthesis. This Pseudoalteromonas atlantica (strain T6c / ATCC BAA-1087) protein is 4-hydroxy-3-methylbut-2-enyl diphosphate reductase.